The following is a 458-amino-acid chain: Serine protease Do-like HtrB (458 aa).

Residues 1–18 (MDYRRDGQNDQHQTEPSH) are compositionally biased toward basic and acidic residues. Residues 1-42 (MDYRRDGQNDQHQTEPSHTEQQNTENQKLIGHSEQELLDAPV) are disordered. The Cytoplasmic portion of the chain corresponds to 1 to 71 (MDYRRDGQND…TAVKKEKKRR (71 aa)). A helical membrane pass occupies residues 72–92 (AAWLSPILGGIIGGGLMLGIA). The Extracellular segment spans residues 93-458 (PYLPSDQNQA…LTKQTESSSS (366 aa)). The disordered stretch occupies residues 146-170 (QTSQNNTFGTGGGSSSESESGTGSG). Residues H187, D217, and S298 each act as charge relay system in the active site. Substrate is bound by residues 296 to 298 (GNS) and 352 to 356 (LGVQM). The region spanning 356–440 (MIDMSQVPET…KTTIQVLRKG (85 aa)) is the PDZ domain.

Belongs to the peptidase S1C family.

It localises to the cell membrane. It carries out the reaction Acts on substrates that are at least partially unfolded. The cleavage site P1 residue is normally between a pair of hydrophobic residues, such as Val-|-Val.. Degrades abnormal exported proteins and responsible for the propeptide processing of a natural pro-protein and for the maturation of a native protein. It also plays a prominent role in stress (heat shock, ethanol, puromycin and NaCl) resistance during active exponential growth. This is Serine protease Do-like HtrB (htrB) from Bacillus subtilis (strain 168).